A 296-amino-acid chain; its full sequence is Cobalamin trafficking protein CblD (296 aa).

The transit peptide at 1-38 directs the protein to the mitochondrion; it reads MAHVLCNRARLVSYLPGFCSLVKRVINPRAFSTAGSSG. N6-acetyllysine is present on Lys-203.

Heterodimer with MMACHC. Forms a multiprotein complex with MMACHC, MTR and MTRR.

The protein localises to the cytoplasm. Its subcellular location is the mitochondrion. Involved in cobalamin metabolism and trafficking. Plays a role in regulating the biosynthesis and the proportion of two coenzymes, methylcob(III)alamin (MeCbl) and 5'-deoxyadenosylcobalamin (AdoCbl). Promotes oxidation of cob(II)alamin bound to MMACHC. The processing of cobalamin in the cytosol occurs in a multiprotein complex composed of at least MMACHC, MMADHC, MTRR (methionine synthase reductase) and MTR (methionine synthase) which may contribute to shuttle safely and efficiently cobalamin towards MTR in order to produce methionine. The sequence is that of Cobalamin trafficking protein CblD from Mus musculus (Mouse).